The primary structure comprises 174 residues: NADH-quinone oxidoreductase subunit I (174 aa).

2 4Fe-4S ferredoxin-type domains span residues 44–74 (LNRY…VEGD) and 90–119 (RVYQ…MTND). [4Fe-4S] cluster contacts are provided by Cys54, Cys57, Cys60, Cys64, Cys99, Cys102, Cys105, and Cys109.

The protein belongs to the complex I 23 kDa subunit family. As to quaternary structure, NDH-1 is composed of 14 different subunits. Subunits NuoA, H, J, K, L, M, N constitute the membrane sector of the complex. The cofactor is [4Fe-4S] cluster.

It is found in the cell membrane. The enzyme catalyses a quinone + NADH + 5 H(+)(in) = a quinol + NAD(+) + 4 H(+)(out). Functionally, NDH-1 shuttles electrons from NADH, via FMN and iron-sulfur (Fe-S) centers, to quinones in the respiratory chain. The immediate electron acceptor for the enzyme in this species is believed to be menaquinone. Couples the redox reaction to proton translocation (for every two electrons transferred, four hydrogen ions are translocated across the cytoplasmic membrane), and thus conserves the redox energy in a proton gradient. The chain is NADH-quinone oxidoreductase subunit I from Mycobacterium sp. (strain JLS).